The chain runs to 283 residues: Lysozyme-like protein 7 (283 aa).

The signal sequence occupies residues 1–18 (MAHKSIVIFSVLAVLCHS). Residues 53–273 (YAYALDIYVQ…AVEEDGKIYA (221 aa)) enclose the Ch-type lysozyme domain.

The protein belongs to the glycosyl hydrolase 25 family. Expressed in intestine. Expressed in rectal gland cells and head neurons.

In terms of biological role, plays a role in resistance to Gram-positive bacteria B.thuringiensis and M.nematophilum and Gram-negative bacteria S.boydii or S.flexneri infection and to fungus C.neoformans infection. Plays a role in susceptibility to Gram-negative bacterium S.typhimurium infection. The sequence is that of Lysozyme-like protein 7 from Caenorhabditis elegans.